A 268-amino-acid polypeptide reads, in one-letter code: Phosphonates import ATP-binding protein PhnC (268 aa).

One can recognise an ABC transporter domain in the interval 11 to 254 (LHAEAVTKRF…EVMAIYQRAE (244 aa)). 43-50 (GLSGSGKS) serves as a coordination point for ATP.

The protein belongs to the ABC transporter superfamily. Phosphonates importer (TC 3.A.1.9.1) family. As to quaternary structure, the complex is composed of two ATP-binding proteins (PhnC), two transmembrane proteins (PhnE) and a solute-binding protein (PhnD).

The protein localises to the cell membrane. The enzyme catalyses phosphonate(out) + ATP + H2O = phosphonate(in) + ADP + phosphate + H(+). Part of the ABC transporter complex PhnCDE involved in phosphonates import. Responsible for energy coupling to the transport system. The protein is Phosphonates import ATP-binding protein PhnC of Nocardia farcinica (strain IFM 10152).